Here is a 204-residue protein sequence, read N- to C-terminus: Thymidylate kinase (204 aa).

9–16 provides a ligand contact to ATP; sequence GLDGAGKS.

It belongs to the thymidylate kinase family.

The enzyme catalyses dTMP + ATP = dTDP + ADP. Functionally, phosphorylation of dTMP to form dTDP in both de novo and salvage pathways of dTTP synthesis. The sequence is that of Thymidylate kinase from Francisella philomiragia subsp. philomiragia (strain ATCC 25017 / CCUG 19701 / FSC 153 / O#319-036).